The following is a 160-amino-acid chain: SsrA-binding protein (160 aa).

Positions 132 to 160 are disordered; that stretch reads KEFDKRDTVRERDSNRELQRTMRNKGKEE.

Belongs to the SmpB family.

It localises to the cytoplasm. Its function is as follows. Required for rescue of stalled ribosomes mediated by trans-translation. Binds to transfer-messenger RNA (tmRNA), required for stable association of tmRNA with ribosomes. tmRNA and SmpB together mimic tRNA shape, replacing the anticodon stem-loop with SmpB. tmRNA is encoded by the ssrA gene; the 2 termini fold to resemble tRNA(Ala) and it encodes a 'tag peptide', a short internal open reading frame. During trans-translation Ala-aminoacylated tmRNA acts like a tRNA, entering the A-site of stalled ribosomes, displacing the stalled mRNA. The ribosome then switches to translate the ORF on the tmRNA; the nascent peptide is terminated with the 'tag peptide' encoded by the tmRNA and targeted for degradation. The ribosome is freed to recommence translation, which seems to be the essential function of trans-translation. In Pseudomonas entomophila (strain L48), this protein is SsrA-binding protein.